Here is a 475-residue protein sequence, read N- to C-terminus: Ribulose bisphosphate carboxylase large chain (475 aa).

A propeptide spanning residues 1-2 (MA) is cleaved from the precursor. Pro-3 is subject to N-acetylproline. Lys-14 carries the post-translational modification N6,N6,N6-trimethyllysine. Substrate contacts are provided by Asn-123 and Thr-173. Catalysis depends on Lys-175, which acts as the Proton acceptor. Lys-177 contributes to the substrate binding site. Mg(2+) contacts are provided by Lys-201, Asp-203, and Glu-204. An N6-carboxylysine modification is found at Lys-201. Catalysis depends on His-294, which acts as the Proton acceptor. Substrate is bound by residues Arg-295, His-327, and Ser-379.

This sequence belongs to the RuBisCO large chain family. Type I subfamily. In terms of assembly, heterohexadecamer of 8 large chains and 8 small chains; disulfide-linked. The disulfide link is formed within the large subunit homodimers. It depends on Mg(2+) as a cofactor. Post-translationally, the disulfide bond which can form in the large chain dimeric partners within the hexadecamer appears to be associated with oxidative stress and protein turnover.

It is found in the plastid. Its subcellular location is the chloroplast. It catalyses the reaction 2 (2R)-3-phosphoglycerate + 2 H(+) = D-ribulose 1,5-bisphosphate + CO2 + H2O. The catalysed reaction is D-ribulose 1,5-bisphosphate + O2 = 2-phosphoglycolate + (2R)-3-phosphoglycerate + 2 H(+). RuBisCO catalyzes two reactions: the carboxylation of D-ribulose 1,5-bisphosphate, the primary event in carbon dioxide fixation, as well as the oxidative fragmentation of the pentose substrate in the photorespiration process. Both reactions occur simultaneously and in competition at the same active site. This Oedogonium cardiacum (Filamentous green alga) protein is Ribulose bisphosphate carboxylase large chain.